The sequence spans 187 residues: Protein GrpE (187 aa).

Residues 1-17 (MSNEEQQQPNPAAQAPE) show a composition bias toward low complexity. Residues 1-27 (MSNEEQQQPNPAAQAPEGAVTEGAAPE) form a disordered region.

Belongs to the GrpE family. In terms of assembly, homodimer.

It is found in the cytoplasm. In terms of biological role, participates actively in the response to hyperosmotic and heat shock by preventing the aggregation of stress-denatured proteins, in association with DnaK and GrpE. It is the nucleotide exchange factor for DnaK and may function as a thermosensor. Unfolded proteins bind initially to DnaJ; upon interaction with the DnaJ-bound protein, DnaK hydrolyzes its bound ATP, resulting in the formation of a stable complex. GrpE releases ADP from DnaK; ATP binding to DnaK triggers the release of the substrate protein, thus completing the reaction cycle. Several rounds of ATP-dependent interactions between DnaJ, DnaK and GrpE are required for fully efficient folding. The protein is Protein GrpE of Thioalkalivibrio sulfidiphilus (strain HL-EbGR7).